The primary structure comprises 195 residues: GRF1-interacting factor 2 (195 aa).

The interval 166–195 (QQPETGLGGNVGLRGGKQDGADGQGKDDGK) is disordered. A compositionally biased stretch (gly residues) spans 171-180 (GLGGNVGLRG). A compositionally biased stretch (basic and acidic residues) spans 181–195 (GKQDGADGQGKDDGK).

This sequence belongs to the SS18 family. Interacts with GRF1. In terms of tissue distribution, predominantly expressed in shoot tips containing the shoot apical meristem (SAM) and flower buds. Also expressed in mature flowers.

Functionally, transcription coactivator that plays a role in the regulation of cell expansion in leaf and cotyledons tissues. Component of a network formed by miR396, the GRFs and their interacting factors (GIFs) acting in the regulation of meristem function, at least partially through the control of cell proliferation. GIFs are involved in the positive regulation of cell proliferation of lateral organs in a functionally redundant manner. The chain is GRF1-interacting factor 2 (GIF2) from Arabidopsis thaliana (Mouse-ear cress).